The following is a 162-amino-acid chain: 2-C-methyl-D-erythritol 2,4-cyclodiphosphate synthase (162 aa).

Positions 12 and 14 each coordinate a divalent metal cation. 4-CDP-2-C-methyl-D-erythritol 2-phosphate-binding positions include 12–14 (DVH) and 38–39 (HS). A divalent metal cation is bound at residue His46. 4-CDP-2-C-methyl-D-erythritol 2-phosphate-binding positions include 60–62 (DIG), 136–139 (TTTE), Phe143, and Arg146.

Belongs to the IspF family. Homotrimer. It depends on a divalent metal cation as a cofactor.

It catalyses the reaction 4-CDP-2-C-methyl-D-erythritol 2-phosphate = 2-C-methyl-D-erythritol 2,4-cyclic diphosphate + CMP. Its pathway is isoprenoid biosynthesis; isopentenyl diphosphate biosynthesis via DXP pathway; isopentenyl diphosphate from 1-deoxy-D-xylulose 5-phosphate: step 4/6. In terms of biological role, involved in the biosynthesis of isopentenyl diphosphate (IPP) and dimethylallyl diphosphate (DMAPP), two major building blocks of isoprenoid compounds. Catalyzes the conversion of 4-diphosphocytidyl-2-C-methyl-D-erythritol 2-phosphate (CDP-ME2P) to 2-C-methyl-D-erythritol 2,4-cyclodiphosphate (ME-CPP) with a corresponding release of cytidine 5-monophosphate (CMP). The chain is 2-C-methyl-D-erythritol 2,4-cyclodiphosphate synthase from Porphyromonas gingivalis (strain ATCC 33277 / DSM 20709 / CIP 103683 / JCM 12257 / NCTC 11834 / 2561).